A 385-amino-acid polypeptide reads, in one-letter code: Circadian-associated transcriptional repressor (385 aa).

Positions 1–26 (MDSPSSVSSYSSYSLSSSFPTSPVNS) are enriched in low complexity. Disordered stretches follow at residues 1–108 (MDSP…SLNT), 203–233 (GGGK…EKMD), and 365–385 (GHRE…LLNL). Basic and acidic residues predominate over residues 33–45 (DSEREDKGAHGPR). Residues 70-79 (VSGNQHTPSH) are compositionally biased toward polar residues.

In terms of assembly, interacts with PER2, CRY2, BHLHE41, HDAC1 and NR3C1. Interacts with BMAL1.

It localises to the nucleus. It is found in the PML body. Functionally, transcriptional repressor which forms a negative regulatory component of the circadian clock and acts independently of the circadian transcriptional repressors: CRY1, CRY2 and BHLHE41. In a histone deacetylase-dependent manner represses the transcriptional activator activity of the CLOCK-BMAL1 heterodimer. Abrogates the interaction of BMAL1 with the transcriptional coactivator CREBBP and can repress the histone acetyl-transferase activity of the CLOCK-BMAL1 heterodimer, reducing histone acetylation of its target genes. Rhythmically binds the E-box elements (5'-CACGTG-3') on circadian gene promoters and its occupancy shows circadian oscillation antiphasic to BMAL1. Interacts with the glucocorticoid receptor (NR3C1) and contributes to the repressive function in the glucocorticoid response. The chain is Circadian-associated transcriptional repressor (CIART) from Homo sapiens (Human).